A 320-amino-acid chain; its full sequence is Heterogeneous nuclear ribonucleoprotein A1 (320 aa).

Met1 is subject to N-acetylmethionine. Ser2 is modified (N-acetylserine; in Heterogeneous nuclear ribonucleoprotein A1, N-terminally processed). At Ser2 the chain carries Phosphoserine. Residue Lys3 is modified to N6-acetyllysine; alternate. Lys3 participates in a covalent cross-link: Glycyl lysine isopeptide (Lys-Gly) (interchain with G-Cter in SUMO2); alternate. Ser4 and Ser6 each carry phosphoserine. The tract at residues 4-94 (SESPKEPEQL…EPKRAVSRED (91 aa)) is globular A domain. A Glycyl lysine isopeptide (Lys-Gly) (interchain with G-Cter in SUMO2) cross-link involves residue Lys8. RRM domains lie at 14-97 (RKLF…DSQR) and 105-184 (KKIF…LSKQ). The residue at position 22 (Ser22) is a Phosphoserine. Residue Lys78 forms a Glycyl lysine isopeptide (Lys-Gly) (interchain with G-Cter in SUMO2) linkage. The globular B domain stretch occupies residues 95–185 (SQRPGAHLTV…EVRKALSKQE (91 aa)). Lys113 participates in a covalent cross-link: Glycyl lysine isopeptide (Lys-Gly) (interchain with G-Cter in SUMO). Residues Lys179 and Lys183 each participate in a glycyl lysine isopeptide (Lys-Gly) (interchain with G-Cter in SUMO2) cross-link. The segment at 182-216 (SKQEMASASSSQRGRSGSGNFGGGRGGGFGGNDNF) is disordered. A Phosphoserine; by MKNK2 modification is found at Ser192. Arg194 is subject to Asymmetric dimethylarginine; alternate. Arg194 bears the Dimethylated arginine; alternate mark. At Arg194 the chain carries Omega-N-methylarginine; alternate. Residues 197–216 (SGSGNFGGGRGGGFGGNDNF) are compositionally biased toward gly residues. Residue Ser199 is modified to Phosphoserine. An asymmetric dimethylarginine; alternate mark is found at Arg206, Arg218, Arg225, and Arg232. Arg206 bears the Dimethylated arginine; alternate mark. Arg206, Arg218, Arg225, and Arg232 each carry omega-N-methylarginine; alternate. The segment at 218–240 (RGGNFSGRGGFGGSRGGGGYGGS) is RNA-binding RGG-box. At Arg225 the chain carries Dimethylated arginine; alternate. Residues 268 to 305 (NQSSNFGPMKGGNFGGRSLGPYGGGGQYFAKPRNQGGY) are nuclear targeting sequence. The span at 277–294 (KGGNFGGRSLGPYGGGGQ) shows a compositional bias: gly residues. Residues 277–320 (KGGNFGGRSLGPYGGGGQYFAKPRNQGGYGGSSSSSSYGSGRRF) are disordered. Arg284 is modified (omega-N-methylarginine). Ser285 is modified (phosphoserine). Lys298 is modified (N6-acetyllysine; alternate). Lys298 participates in a covalent cross-link: Glycyl lysine isopeptide (Lys-Gly) (interchain with G-Cter in SUMO2); alternate. Arg300 is subject to Omega-N-methylarginine. The span at 308 to 320 (SSSSSSYGSGRRF) shows a compositional bias: low complexity. At Ser309 the chain carries Phosphoserine. A phosphoserine; by MKNK2 mark is found at Ser310, Ser311, and Ser312. Phosphoserine occurs at positions 313 and 316. Residue Arg318 is modified to Omega-N-methylarginine.

Identified in the spliceosome C complex. Identified in a IGF2BP1-dependent mRNP granule complex containing untranslated mRNAs. Interacts with SEPT6, C9orf72, KHDRBS1, UBQLN2. Interacts with PPIA/CYPA. Sumoylated.

It is found in the nucleus. Its subcellular location is the cytoplasm. Functionally, involved in the packaging of pre-mRNA into hnRNP particles, transport of poly(A) mRNA from the nucleus to the cytoplasm and modulation of splice site selection. Plays a role in the splicing of pyruvate kinase PKM by binding repressively to sequences flanking PKM exon 9, inhibiting exon 9 inclusion and resulting in exon 10 inclusion and production of the PKM M2 isoform. Binds to the IRES and thereby inhibits the translation of the apoptosis protease activating factor APAF1. May bind to specific miRNA hairpins. This is Heterogeneous nuclear ribonucleoprotein A1 (HNRNPA1) from Macaca mulatta (Rhesus macaque).